The following is a 1241-amino-acid chain: Putative urea carboxylase (1241 aa).

One can recognise a Biotin carboxylation domain in the interval 3 to 459; that stretch reads ALKTLLIANR…LTKFLNNFEY (457 aa). Positions 117 and 201 each coordinate ATP. The 201-residue stretch at 121–321 folds into the ATP-grasp domain; it reads RELATKAGVP…LVELMLRQAD (201 aa). In terms of domain architecture, Biotinyl-binding spans 1159 to 1239; that stretch reads EELLKDPEIT…EAGKPLMLVR (81 aa). K1202 carries the post-translational modification N6-biotinyllysine.

Requires biotin as cofactor.

It catalyses the reaction urea + hydrogencarbonate + ATP = urea-1-carboxylate + ADP + phosphate + H(+). Involved in the utilization of lactams. Required for the conversion of exogenous 2-pyrrolidinone (gamma-butyrolactam) to endogenous gamma-amino-n-butyrate (GABA). In Emericella nidulans (strain FGSC A4 / ATCC 38163 / CBS 112.46 / NRRL 194 / M139) (Aspergillus nidulans), this protein is Putative urea carboxylase (lamA).